The chain runs to 130 residues: Follitropin subunit beta (130 aa).

The signal sequence occupies residues 1-20 (MMKSIQLCILLWCLRAVCCH). 6 disulfide bridges follow: C22–C70, C36–C85, C39–C123, C47–C101, C51–C103, and C106–C113. 2 N-linked (GlcNAc...) asparagine glycosylation sites follow: N26 and N43.

The protein belongs to the glycoprotein hormones subunit beta family. As to quaternary structure, heterodimer. The active follitropin is a heterodimer composed of an alpha chain/CGA shared with other hormones and a unique beta chain/FSHB shown here.

Its subcellular location is the secreted. In terms of biological role, together with the alpha chain CGA constitutes follitropin, the follicle-stimulating hormone, and provides its biological specificity to the hormone heterodimer. Binds FSHR, a G protein-coupled receptor, on target cells to activate downstream signaling pathways. Follitropin is involved in follicle development and spermatogenesis in reproductive organs. This Rattus norvegicus (Rat) protein is Follitropin subunit beta (Fshb).